The sequence spans 1134 residues: RNA-binding protein NAB6 (1134 aa).

Ser2 carries the post-translational modification N-acetylserine. Disordered stretches follow at residues 112–133, 151–173, and 464–491; these read RPVS…NTNN, RNNN…RNNS, and SVPS…SGIT. Low complexity-rich tracts occupy residues 115 to 133 and 151 to 164; these read SNHN…NTNN and RNNN…HNNN. Phosphoserine occurs at positions 464 and 467. Low complexity predominate over residues 471-489; the sequence is GNNNDSNNNGNNNKSNMSG. The 74-residue stretch at 653 to 726 folds into the RRM domain; it reads RTIYIGNINP…NMLRVGWGHY (74 aa). Disordered stretches follow at residues 918–959 and 1043–1092; these read LDAH…FGGL and NYRS…GSFA. The segment covering 1057-1081 has biased composition (polar residues); sequence STLSYNHSKNNETPMQDIFTNGETA. Over residues 1083 to 1092 the composition is skewed to basic residues; that stretch reads NRKKKRGSFA.

The protein resides in the cytoplasm. RNA-binding protein that associates with mRNAs encoding cell wall proteins. The polypeptide is RNA-binding protein NAB6 (NAB6) (Saccharomyces cerevisiae (strain ATCC 204508 / S288c) (Baker's yeast)).